The following is a 399-amino-acid chain: MSQRQPQSPNQTLISTTNDTESSSSVVPNDSTNKRRTGDNSPGIEALCAIYITYAVIISVGILGNAILIKVFFKTKSMQTVPNIFITSLAFGDLLLLLTCVPVDVTHYLAEGWLFGRIGCKVLSFIRLTSVGVSVFTLTILSADRYKAVVKPLERQPPNAILKTCAKAGCIWIMSMIIALPEAIFSNVYTFQDPDKNVTFKACASYPVSERLLQEIHSLLCFLVFYIIPLSIISVYYSLIARTLYKSTLNIPTEEQRHARKQIESRKRIAKTVLVLVALFALCWLPNHLLYLYRSFTSQTYMDSSTVHLFVTIISRILAFSNSCVNPFALYWLSNTFQQHFKAQLFCCKAGRPDPTAANTPLDNLAVMGRVPGAASTQMSEISVSPFTGCSVKKEDDRV.

Polar residues predominate over residues 1 to 31 (MSQRQPQSPNQTLISTTNDTESSSSVVPNDS). The segment at 1 to 38 (MSQRQPQSPNQTLISTTNDTESSSSVVPNDSTNKRRTG) is disordered. Topologically, residues 1–41 (MSQRQPQSPNQTLISTTNDTESSSSVVPNDSTNKRRTGDNS) are extracellular. 3 N-linked (GlcNAc...) asparagine glycosylation sites follow: Asn-10, Asn-18, and Asn-29. The helical transmembrane segment at 42–63 (PGIEALCAIYITYAVIISVGIL) threads the bilayer. Topologically, residues 64–82 (GNAILIKVFFKTKSMQTVP) are cytoplasmic. The chain crosses the membrane as a helical span at residues 83–103 (NIFITSLAFGDLLLLLTCVPV). At 104 to 121 (DVTHYLAEGWLFGRIGCK) the chain is on the extracellular side. A disulfide bridge connects residues Cys-120 and Cys-203. The chain crosses the membrane as a helical span at residues 122 to 143 (VLSFIRLTSVGVSVFTLTILSA). At 144–163 (DRYKAVVKPLERQPPNAILK) the chain is on the cytoplasmic side. The helical transmembrane segment at 164–184 (TCAKAGCIWIMSMIIALPEAI) threads the bilayer. The Extracellular portion of the chain corresponds to 185–220 (FSNVYTFQDPDKNVTFKACASYPVSERLLQEIHSLL). Residues 221–241 (CFLVFYIIPLSIISVYYSLIA) traverse the membrane as a helical segment. The Cytoplasmic segment spans residues 242 to 272 (RTLYKSTLNIPTEEQRHARKQIESRKRIAKT). Residues 273-293 (VLVLVALFALCWLPNHLLYLY) traverse the membrane as a helical segment. Residues 294-313 (RSFTSQTYMDSSTVHLFVTI) are Extracellular-facing. A helical membrane pass occupies residues 314-333 (ISRILAFSNSCVNPFALYWL). Residues 334 to 399 (SNTFQQHFKA…CSVKKEDDRV (66 aa)) lie on the Cytoplasmic side of the membrane.

It belongs to the G-protein coupled receptor 1 family. As to quaternary structure, interacts with C6orf89.

It localises to the cell membrane. In terms of biological role, role in sperm cell division, maturation, or function. This receptor mediates its action by association with G proteins that activate a phosphatidylinositol-calcium second messenger system. This chain is Bombesin receptor subtype-3 (BRS3), found in Ovis aries (Sheep).